We begin with the raw amino-acid sequence, 122 residues long: Large ribosomal subunit protein uL14 (122 aa).

Belongs to the universal ribosomal protein uL14 family. In terms of assembly, part of the 50S ribosomal subunit. Forms a cluster with proteins L3 and L19. In the 70S ribosome, L14 and L19 interact and together make contacts with the 16S rRNA in bridges B5 and B8.

Binds to 23S rRNA. Forms part of two intersubunit bridges in the 70S ribosome. This chain is Large ribosomal subunit protein uL14, found in Laribacter hongkongensis (strain HLHK9).